The following is a 289-amino-acid chain: ATP synthase gamma chain (289 aa).

Belongs to the ATPase gamma chain family. As to quaternary structure, F-type ATPases have 2 components, CF(1) - the catalytic core - and CF(0) - the membrane proton channel. CF(1) has five subunits: alpha(3), beta(3), gamma(1), delta(1), epsilon(1). CF(0) has three main subunits: a, b and c.

The protein localises to the cell inner membrane. Produces ATP from ADP in the presence of a proton gradient across the membrane. The gamma chain is believed to be important in regulating ATPase activity and the flow of protons through the CF(0) complex. The polypeptide is ATP synthase gamma chain (Mannheimia succiniciproducens (strain KCTC 0769BP / MBEL55E)).